Here is a 365-residue protein sequence, read N- to C-terminus: Peptide chain release factor 1 (365 aa).

Gln-236 carries the N5-methylglutamine modification.

The protein belongs to the prokaryotic/mitochondrial release factor family. Post-translationally, methylated by PrmC. Methylation increases the termination efficiency of RF1.

It localises to the cytoplasm. In terms of biological role, peptide chain release factor 1 directs the termination of translation in response to the peptide chain termination codons UAG and UAA. This Latilactobacillus sakei subsp. sakei (strain 23K) (Lactobacillus sakei subsp. sakei) protein is Peptide chain release factor 1.